The chain runs to 299 residues: 4-diphosphocytidyl-2-C-methyl-D-erythritol kinase (299 aa).

K10 is a catalytic residue. 96 to 106 (PVAGGMAGGSA) serves as a coordination point for ATP. Residue D138 is part of the active site.

It belongs to the GHMP kinase family. IspE subfamily.

It carries out the reaction 4-CDP-2-C-methyl-D-erythritol + ATP = 4-CDP-2-C-methyl-D-erythritol 2-phosphate + ADP + H(+). It functions in the pathway isoprenoid biosynthesis; isopentenyl diphosphate biosynthesis via DXP pathway; isopentenyl diphosphate from 1-deoxy-D-xylulose 5-phosphate: step 3/6. Catalyzes the phosphorylation of the position 2 hydroxy group of 4-diphosphocytidyl-2C-methyl-D-erythritol. In Streptomyces coelicolor (strain ATCC BAA-471 / A3(2) / M145), this protein is 4-diphosphocytidyl-2-C-methyl-D-erythritol kinase.